The primary structure comprises 254 residues: Activity-regulated cytoskeleton associated protein 1 (254 aa).

Belongs to the ARC/ARG3.1 family. Homooligomer; homooligomerizes into virion-like capsids. Expressed in a specific population of brain neurons, named E347, that are necessary and sufficient for proper body fat storage.

The protein resides in the extracellular vesicle membrane. The protein localises to the synapse. Its function is as follows. Master regulator of synaptic plasticity that self-assembles into virion-like capsids that encapsulate RNAs and mediate intercellular RNA transfer from motorneurons to muscles. Arc1 protein is released from motorneurons in extracellular vesicles that mediate the transfer of Arc1 mRNA into muscle cells, where Arc1 mRNA can undergo activity-dependent translation. Intercellular transfer od Arc1 mRNA is required for synaptic plasticity at the neuromuscular junction. May play a role in energy balance: required for regulation of body fat by a specific population of brain neurons, named E347, that are necessary and sufficient for proper body fat storage. This chain is Activity-regulated cytoskeleton associated protein 1, found in Drosophila melanogaster (Fruit fly).